Reading from the N-terminus, the 92-residue chain is Large ribosomal subunit protein eL43 (92 aa).

The segment at 39 to 60 (CSFCGKKAVKRGAAGIWNCSSC) adopts a C4-type zinc-finger fold.

It belongs to the eukaryotic ribosomal protein eL43 family.

The sequence is that of Large ribosomal subunit protein eL43 (RPL43) from Eremothecium gossypii (strain ATCC 10895 / CBS 109.51 / FGSC 9923 / NRRL Y-1056) (Yeast).